Here is a 526-residue protein sequence, read N- to C-terminus: Variant surface glycoprotein MITAT 1.4A (526 aa).

A signal peptide spans 1 to 33 (MDCHTKETLGVTQWRRSTMLTLSLLYAITPADG). Disulfide bonds link C47–C173 and C154–C215. The disordered stretch occupies residues 157–193 (NEGGDGDGKDQLAPKGCRHGTEADFDAGAGPAESEVA). N453 carries an N-linked (GlcNAc...) asparagine glycan. A lipid anchor (GPI-anchor amidated aspartate) is attached at D503. The propeptide at 504–526 (SSILVTKKFALTVVSAAFVALLF) is removed in mature form.

It localises to the cell membrane. In terms of biological role, VSG forms a coat on the surface of the parasite. The trypanosome evades the immune response of the host by expressing a series of antigenically distinct VSGs from an estimated 1000 VSG genes. The chain is Variant surface glycoprotein MITAT 1.4A from Trypanosoma brucei brucei.